We begin with the raw amino-acid sequence, 269 residues long: Regulatory protein RecX (269 aa).

The protein belongs to the RecX family.

The protein resides in the cytoplasm. Its function is as follows. Modulates RecA activity. The polypeptide is Regulatory protein RecX (Lactococcus lactis subsp. cremoris (strain SK11)).